The following is a 275-amino-acid chain: Voltage-dependent calcium channel gamma-5 subunit (275 aa).

4 helical membrane passes run 8 to 28 (ALTL…GIAV), 103 to 123 (FPLV…IGHI), 129 to 149 (ILAF…VVGL), and 176 to 196 (GWSF…GVMS).

This sequence belongs to the PMP-22/EMP/MP20 family. CACNG subfamily. The L-type calcium channel is composed of five subunits: alpha-1, alpha-2/delta, beta and gamma. Acts as an auxiliary subunit for AMPA-selective glutamate receptors (AMPARs). Found in a complex with GRIA1, GRIA2, GRIA3, GRIA4, CNIH2, CNIH3, CACNG2, CACNG3, CACNG4, CACNG7 and CACNG8. Interacts with GRIA1, GRIA2, GRIA3 and GRIA4.

The protein localises to the membrane. Its subcellular location is the postsynaptic density membrane. Its function is as follows. Regulates the gating properties of AMPA-selective glutamate receptors (AMPARs). Modulates their gating properties by accelerating their rates of activation, deactivation and desensitization. Displays subunit-specific AMPA receptor regulation. Shows specificity for GRIA1, GRIA4 and the long isoform of GRIA2. Thought to stabilize the calcium channel in an inactivated (closed) state. In Homo sapiens (Human), this protein is Voltage-dependent calcium channel gamma-5 subunit (CACNG5).